A 60-amino-acid chain; its full sequence is Large ribosomal subunit protein bL32 (60 aa).

The disordered stretch occupies residues 1–60 (MAVQQNKKTPSKRGMHRSHDFLVAPQLSVEPTTGETHMRHHISPNGFYRGRKVLKTKNDE). Positions 49-60 (RGRKVLKTKNDE) are enriched in basic residues.

The protein belongs to the bacterial ribosomal protein bL32 family.

This chain is Large ribosomal subunit protein bL32, found in Janthinobacterium sp. (strain Marseille) (Minibacterium massiliensis).